The primary structure comprises 102 residues: Large ribosomal subunit protein eL31 (102 aa).

This sequence belongs to the eukaryotic ribosomal protein eL31 family.

The protein is Large ribosomal subunit protein eL31 of Staphylothermus marinus (strain ATCC 43588 / DSM 3639 / JCM 9404 / F1).